Here is an 84-residue protein sequence, read N- to C-terminus: Toxin Tb1 (84 aa).

The first 20 residues, 1 to 20, serve as a signal peptide directing secretion; that stretch reads MKGMILFISCLLLIGIVVEC. The LCN-type CS-alpha/beta domain occupies 21-82; that stretch reads KEGYLMDHEG…VWDRATNKCG (62 aa). 4 disulfides stabilise this stretch: Cys31-Cys81, Cys35-Cys57, Cys43-Cys62, and Cys47-Cys64. Residue Cys81 is modified to Cysteine amide.

This sequence belongs to the long (4 C-C) scorpion toxin superfamily. Sodium channel inhibitor family. Beta subfamily. In terms of tissue distribution, expressed by the venom gland.

Its subcellular location is the secreted. In terms of biological role, beta toxins bind voltage-independently at site-4 of sodium channels (Nav) and shift the voltage of activation toward more negative potentials thereby affecting sodium channel activation and promoting spontaneous and repetitive firing. Is lethal to mice. This is Toxin Tb1 from Tityus bahiensis (Brazilian scorpion).